A 100-amino-acid chain; its full sequence is MKHLLIVSLVFVTIIWKIECETDMYDDSSIVKTEETEEVKPCGLNEVWMVCSSCEEECGKTPQPCPRICQPARCQCPAHKGYRRDGQGNCIFCHDSVPKL.

A signal peptide spans 1 to 20 (MKHLLIVSLVFVTIIWKIEC). Cystine bridges form between Cys42/Cys74, Cys51/Cys69, Cys54/Cys65, Cys58/Cys93, and Cys76/Cys90. The region spanning 42–93 (CGLNEVWMVCSSCEEECGKTPQPCPRICQPARCQCPAHKGYRRDGQGNCIFC) is the TIL domain.

The protein resides in the secreted. The sequence is that of Serine protease inhibitor 1 protein from Caenorhabditis elegans.